A 443-amino-acid chain; its full sequence is Ribosomal protein uS12 methylthiotransferase RimO (443 aa).

Residues 8–118 (PKIGFVSLGC…VLSHIHHYVP (111 aa)) form the MTTase N-terminal domain. The [4Fe-4S] cluster site is built by Cys-17, Cys-53, Cys-82, Cys-150, Cys-154, and Cys-157. The region spanning 136–373 (LTPRHYAYLK…MQLQQQISTE (238 aa)) is the Radical SAM core domain. Residues 376–442 (QEKIGKVLPV…EYDLWGTIVE (67 aa)) enclose the TRAM domain.

Belongs to the methylthiotransferase family. RimO subfamily. [4Fe-4S] cluster serves as cofactor.

Its subcellular location is the cytoplasm. It catalyses the reaction L-aspartate(89)-[ribosomal protein uS12]-hydrogen + (sulfur carrier)-SH + AH2 + 2 S-adenosyl-L-methionine = 3-methylsulfanyl-L-aspartate(89)-[ribosomal protein uS12]-hydrogen + (sulfur carrier)-H + 5'-deoxyadenosine + L-methionine + A + S-adenosyl-L-homocysteine + 2 H(+). Catalyzes the methylthiolation of an aspartic acid residue of ribosomal protein uS12. The protein is Ribosomal protein uS12 methylthiotransferase RimO of Proteus mirabilis (strain HI4320).